The sequence spans 588 residues: MATATPVQQQRAGSRASAPATPLSPTRLSRLQEKEELRELNDRLAVYIDKVRSLETENSALQLQVTEREEVRGRELTGLKALYETELADARRALDDTARERAKLQIELGKFKAEHDQLLLNYAKKESDLSGAQIKLREYEAALNSKDAALATALGDKKSLEGDLEDLKDQIAQLEASLSAAKKQLADETLLKVDLENRCQSLTEDLEFRKNMYEEEINETRRKHETRLVEVDSGRQIEYEYKLAQALHEMREQHDAQVRLYKEELEQTYHAKLENARLSSEMNTSTVNSAREELMESRMRIESLSSQLSNLQKESRACLERIQELEDMLAKERDNSRRMLSDREREMAEIRDQMQQQLSDYEQLLDVKLALDMEISAYRKLLEGEEERLKLSPSPSSRVTVSRASSSRSVRTTRGKRKRVDVEESEASSSVSISHSASATGNVCIEEIDVDGKFIRLKNTSEQDQPMGGWEMIRKIGDTSVSYKYTSRYVLKAGQTVTVWAANAGVTASPPTDLIWKNQNSWGTGEDVKVILKNSQGEEVAQRSTVFKTTIPEEEEEEEEEPIGVAVEEERFHQQGAPRASNKSCAIM.

Over residues 1–12 (MATATPVQQQRA) the composition is skewed to polar residues. The segment at 1-34 (MATATPVQQQRAGSRASAPATPLSPTRLSRLQEK) is disordered. Alanine 2 is subject to N-acetylalanine. Positions 2-35 (ATATPVQQQRAGSRASAPATPLSPTRLSRLQEKE) are head. Phosphothreonine is present on residues threonine 3 and threonine 5. Position 15 is an omega-N-methylarginine (arginine 15). Residue serine 17 is modified to Phosphoserine. Residue threonine 21 is modified to Phosphothreonine. Phosphoserine is present on serine 24. Phosphothreonine is present on threonine 26. Position 29 is a phosphoserine (serine 29). Residues 33–389 (EKEELRELND…KLLEGEEERL (357 aa)) form the IF rod domain. The tract at residues 36-70 (ELRELNDRLAVYIDKVRSLETENSALQLQVTEREE) is coil 1A. The segment at 71-82 (VRGRELTGLKAL) is linker 1. The tract at residues 83 to 216 (YETELADARR…EFRKNMYEEE (134 aa)) is coil 1B. Residue lysine 103 forms a Glycyl lysine isopeptide (Lys-Gly) (interchain with G-Cter in SUMO2) linkage. Lysine 112 carries the post-translational modification N6-acetyllysine. Lysine 124 is covalently cross-linked (Glycyl lysine isopeptide (Lys-Gly) (interchain with G-Cter in SUMO2)). Serine 127 carries the post-translational modification Phosphoserine. A Glycyl lysine isopeptide (Lys-Gly) (interchain with G-Cter in SUMO2) cross-link involves residue lysine 146. At lysine 158 the chain carries N6-acetyllysine; alternate. Residue lysine 158 forms a Glycyl lysine isopeptide (Lys-Gly) (interchain with G-Cter in SUMO2); alternate linkage. The residue at position 159 (serine 159) is a Phosphoserine. Residue lysine 182 forms a Glycyl lysine isopeptide (Lys-Gly) (interchain with G-Cter in SUMO2) linkage. Phosphoserine occurs at positions 201 and 233. Residues 217-244 (INETRRKHETRLVEVDSGRQIEYEYKLA) form a linker 2 region. Glycyl lysine isopeptide (Lys-Gly) (interchain with G-Cter in SUMO2) cross-links involve residues lysine 242 and lysine 262. Residues 245 to 387 (QALHEMREQH…YRKLLEGEEE (143 aa)) form a coil 2 region. At lysine 272 the chain carries N6-acetyllysine; alternate. Lysine 272 is covalently cross-linked (Glycyl lysine isopeptide (Lys-Gly) (interchain with G-Cter in SUMO2); alternate). 2 positions are modified to phosphoserine: serine 279 and serine 303. Residue lysine 313 forms a Glycyl lysine isopeptide (Lys-Gly) (interchain with G-Cter in SUMO2) linkage. N6-acetyllysine; alternate is present on lysine 331. Residue lysine 331 forms a Glycyl lysine isopeptide (Lys-Gly) (interchain with G-Cter in SUMO2); alternate linkage. Phosphoserine is present on residues serine 376 and serine 394. The segment at 388 to 588 (RLKLSPSPSS…RASNKSCAIM (201 aa)) is tail. Residues 391 to 410 (LSPSPSSRVTVSRASSSRSV) show a composition bias toward low complexity. The segment at 391-433 (LSPSPSSRVTVSRASSSRSVRTTRGKRKRVDVEESEASSSVSI) is disordered. Residue threonine 400 is glycosylated (O-linked (GlcNAc) threonine). Arginine 414 bears the Omega-N-methylarginine mark. Positions 416–421 (KRKRVD) match the Nuclear localization signal motif. The LTD domain maps to 431-547 (VSISHSASAT…EEVAQRSTVF (117 aa)). Lysine 484 carries the post-translational modification N6-acetyllysine. Lysine 533 participates in a covalent cross-link: Glycyl lysine isopeptide (Lys-Gly) (interchain with G-Cter in SUMO2). Serine 535 bears the Phosphoserine mark. Lysine 548 participates in a covalent cross-link: Glycyl lysine isopeptide (Lys-Gly) (interchain with G-Cter in SUMO2). A Cysteine methyl ester modification is found at cysteine 585. A lipid anchor (S-farnesyl cysteine) is attached at cysteine 585. A propeptide spans 586–588 (AIM) (removed in mature form).

It belongs to the intermediate filament family. In terms of assembly, homodimer. Lamin dimers then assemble into dimeric head-to-tail polymers. Ultimately, two head-to-tail polymers assemble laterally into a protofilament with a uniformly shaped rod of 3.5 nm in diameter. Interacts with SPAG4 and SEPT12. B-type lamins undergo a series of modifications, such as farnesylation and phosphorylation. Increased phosphorylation of the lamins occurs before envelope disintegration and probably plays a role in regulating lamin associations. In terms of processing, phosphorylation plays a key role in lamin organization, subcellular localization and nuclear envelope disintegration. Phosphorylation by CDK1 at Ser-24 and Ser-394 at the onset of mitosis drives lamin disassembly and nuclear envelope breakdown.

It is found in the nucleus lamina. Functionally, lamins are intermediate filament proteins that assemble into a filamentous meshwork, and which constitute the major components of the nuclear lamina, a fibrous layer on the nucleoplasmic side of the inner nuclear membrane. Lamins provide a framework for the nuclear envelope, bridging the nuclear envelope and chromatin, thereby playing an important role in nuclear assembly, chromatin organization, nuclear membrane and telomere dynamics. The structural integrity of the lamina is strictly controlled by the cell cycle, as seen by the disintegration and formation of the nuclear envelope in prophase and telophase, respectively. This Mus musculus (Mouse) protein is Lamin-B1 (Lmnb1).